The primary structure comprises 346 residues: Cyclin-dependent kinase 20 (346 aa).

In terms of domain architecture, Protein kinase spans 4 to 288 (YCILGRIGEG…ASQALLHQYF (285 aa)). Residues 10–18 (IGEGAHGIV) and Lys33 each bind ATP. Residue Asp127 is the Proton acceptor of the active site. The disordered stretch occupies residues 298–324 (SELPIPQRPGGPAPKAHPGPPHVHDFH). The span at 303–318 (PQRPGGPAPKAHPGPP) shows a compositional bias: pro residues.

This sequence belongs to the protein kinase superfamily. CMGC Ser/Thr protein kinase family. CDC2/CDKX subfamily. As to quaternary structure, monomer. Interacts with MAK. Interacts with TBC1D32.

The protein resides in the nucleus. Its subcellular location is the cytoplasm. It is found in the cell projection. The protein localises to the cilium. It catalyses the reaction L-seryl-[protein] + ATP = O-phospho-L-seryl-[protein] + ADP + H(+). It carries out the reaction L-threonyl-[protein] + ATP = O-phospho-L-threonyl-[protein] + ADP + H(+). Functionally, involved in cell growth. Activates CDK2, a kinase involved in the control of the cell cycle, by phosphorylating residue 'Thr-160'. Required for high-level Shh responses in the developing neural tube. Together with TBC1D32, controls the structure of the primary cilium by coordinating assembly of the ciliary membrane and axoneme, allowing GLI2 to be properly activated in response to SHH signaling. This chain is Cyclin-dependent kinase 20 (Cdk20), found in Mus musculus (Mouse).